Reading from the N-terminus, the 106-residue chain is Pyrimidine/purine nucleoside phosphorylase (106 aa).

Belongs to the nucleoside phosphorylase PpnP family.

It catalyses the reaction a purine D-ribonucleoside + phosphate = a purine nucleobase + alpha-D-ribose 1-phosphate. It carries out the reaction adenosine + phosphate = alpha-D-ribose 1-phosphate + adenine. The enzyme catalyses cytidine + phosphate = cytosine + alpha-D-ribose 1-phosphate. The catalysed reaction is guanosine + phosphate = alpha-D-ribose 1-phosphate + guanine. It catalyses the reaction inosine + phosphate = alpha-D-ribose 1-phosphate + hypoxanthine. It carries out the reaction thymidine + phosphate = 2-deoxy-alpha-D-ribose 1-phosphate + thymine. The enzyme catalyses uridine + phosphate = alpha-D-ribose 1-phosphate + uracil. The catalysed reaction is xanthosine + phosphate = alpha-D-ribose 1-phosphate + xanthine. Functionally, catalyzes the phosphorolysis of diverse nucleosides, yielding D-ribose 1-phosphate and the respective free bases. Can use uridine, adenosine, guanosine, cytidine, thymidine, inosine and xanthosine as substrates. Also catalyzes the reverse reactions. The chain is Pyrimidine/purine nucleoside phosphorylase from Burkholderia vietnamiensis (strain G4 / LMG 22486) (Burkholderia cepacia (strain R1808)).